The following is a 204-amino-acid chain: Large ribosomal subunit protein bL25 (204 aa).

It belongs to the bacterial ribosomal protein bL25 family. CTC subfamily. In terms of assembly, part of the 50S ribosomal subunit; part of the 5S rRNA/L5/L18/L25 subcomplex. Contacts the 5S rRNA. Binds to the 5S rRNA independently of L5 and L18.

Its function is as follows. This is one of the proteins that binds to the 5S RNA in the ribosome where it forms part of the central protuberance. The polypeptide is Large ribosomal subunit protein bL25 (Pseudomonas aeruginosa (strain LESB58)).